Reading from the N-terminus, the 353-residue chain is Inositol-tetrakisphosphate 1-kinase 3 (353 aa).

The tract at residues methionine 1–serine 25 is disordered. The 1D-myo-inositol 1,3,4-trisphosphate site is built by lysine 50 and lysine 92. Positions 127 and 177 each coordinate ATP. An ATP-grasp domain is found at asparagine 138 to alanine 350. 2 residues coordinate 1D-myo-inositol 1,3,4-trisphosphate: histidine 188 and lysine 220. ATP contacts are provided by residues glutamine 209–lysine 220 and serine 235. Mg(2+)-binding residues include aspartate 300, aspartate 315, and asparagine 317. A 1D-myo-inositol 1,3,4-trisphosphate-binding site is contributed by asparagine 317.

This sequence belongs to the ITPK1 family. As to quaternary structure, monomer. Mg(2+) is required as a cofactor. As to expression, highly expressed in leaves and flowers, and at lower levels in roots, stems, cauline leaves and siliques.

The catalysed reaction is 1D-myo-inositol 3,4,5,6-tetrakisphosphate + ATP = 1D-myo-inositol 1,3,4,5,6-pentakisphosphate + ADP + H(+). It catalyses the reaction 1D-myo-inositol 1,3,4-trisphosphate + ATP = 1D-myo-inositol 1,3,4,5-tetrakisphosphate + ADP + H(+). The enzyme catalyses 1D-myo-inositol 1,3,4-trisphosphate + ATP = 1D-myo-inositol 1,3,4,6-tetrakisphosphate + ADP + H(+). Functionally, kinase that can phosphorylate various inositol polyphosphate such as Ins(3,4,5,6)P4 or Ins(1,3,4)P3. Phosphorylates Ins(3,4,5,6)P4 to form InsP5. This reaction is thought to have regulatory importance, since Ins(3,4,5,6)P4 is an inhibitor of plasma membrane Ca(2+)-activated Cl(-) channels, while Ins(1,3,4,5,6)P5 is not. Also phosphorylates Ins(1,3,4)P3 or a racemic mixture of Ins(1,4,6)P3 and Ins(3,4,6)P3 to form InsP4. Ins(1,3,4,6)P4 is an essential molecule in the hexakisphosphate (InsP6) pathway. This chain is Inositol-tetrakisphosphate 1-kinase 3 (ITPK3), found in Arabidopsis thaliana (Mouse-ear cress).